Here is a 307-residue protein sequence, read N- to C-terminus: UDP-N-acetylenolpyruvoylglucosamine reductase (307 aa).

In terms of domain architecture, FAD-binding PCMH-type spans 34-197 (VGGNAEALFR…LSASLKGRPG (164 aa)). Residue Arg177 is part of the active site. Residue Ser226 is the Proton donor of the active site. Glu296 is an active-site residue.

Belongs to the MurB family. FAD serves as cofactor.

Its subcellular location is the cytoplasm. It carries out the reaction UDP-N-acetyl-alpha-D-muramate + NADP(+) = UDP-N-acetyl-3-O-(1-carboxyvinyl)-alpha-D-glucosamine + NADPH + H(+). It participates in cell wall biogenesis; peptidoglycan biosynthesis. In terms of biological role, cell wall formation. The sequence is that of UDP-N-acetylenolpyruvoylglucosamine reductase from Paramagnetospirillum magneticum (strain ATCC 700264 / AMB-1) (Magnetospirillum magneticum).